Here is a 252-residue protein sequence, read N- to C-terminus: tRNA (guanine-N(1)-)-methyltransferase (252 aa).

Residues Gly118 and 138-143 (IGDYVL) each bind S-adenosyl-L-methionine.

It belongs to the RNA methyltransferase TrmD family. In terms of assembly, homodimer.

It is found in the cytoplasm. It carries out the reaction guanosine(37) in tRNA + S-adenosyl-L-methionine = N(1)-methylguanosine(37) in tRNA + S-adenosyl-L-homocysteine + H(+). Functionally, specifically methylates guanosine-37 in various tRNAs. The polypeptide is tRNA (guanine-N(1)-)-methyltransferase (Pseudomonas aeruginosa (strain UCBPP-PA14)).